A 158-amino-acid chain; its full sequence is MGRFLLVTLSLLVGAFSLNEANSCCCPQDWLPKNGFCYKVFNDHKNWNDAEMFCRKFKPGCHLASIHSNADSADLAEYVSDYLKSDGNVWIGLNDPRKQRTWVWSDRSPTNYYSWNRGEPNNSKNNEYCVHLWALSGYLKWNDTPCKALYSFICQCRF.

A signal peptide spans 1-23 (MGRFLLVTLSLLVGAFSLNEANS). 4 cysteine pairs are disulfide-bonded: Cys26-Cys37, Cys54-Cys154, Cys61-Cys156, and Cys129-Cys146. The 123-residue stretch at 33–155 (KNGFCYKVFN…CKALYSFICQ (123 aa)) folds into the C-type lectin domain. The Mannose-binding motif lies at 119–121 (EPN). N-linked (GlcNAc...) asparagine glycosylation is present at Asn121. 3 residues coordinate Ca(2+): Glu127, Asn142, and Asp143.

It belongs to the true venom lectin family. As to quaternary structure, dimer. Probably disulfide-linked homodimer. In terms of tissue distribution, expressed by the venom gland.

It is found in the secreted. In terms of biological role, mannose-binding lectin that binds to and agglutinates rabbit (but not human) erythrocytes in a calcium-dependent manner. This Oxyuranus scutellatus (Coastal taipan) protein is C-type lectin mannose-binding isoform.